The primary structure comprises 644 residues: uncharacterized protein (644 aa).

A disordered region spans residues D65–N117. The segment covering H89–V114 has biased composition (acidic residues).

This is an uncharacterized protein from Arabidopsis thaliana (Mouse-ear cress).